A 246-amino-acid chain; its full sequence is Pyridoxine 5'-phosphate synthase (246 aa).

A 3-amino-2-oxopropyl phosphate-binding site is contributed by Asn-12. 14-15 (DH) serves as a coordination point for 1-deoxy-D-xylulose 5-phosphate. Arg-23 is a binding site for 3-amino-2-oxopropyl phosphate. Catalysis depends on His-48, which acts as the Proton acceptor. The 1-deoxy-D-xylulose 5-phosphate site is built by Arg-50 and His-55. Glu-75 (proton acceptor) is an active-site residue. Thr-105 is a binding site for 1-deoxy-D-xylulose 5-phosphate. His-196 (proton donor) is an active-site residue. 3-amino-2-oxopropyl phosphate contacts are provided by residues Gly-197 and 218–219 (GH).

It belongs to the PNP synthase family. As to quaternary structure, homooctamer; tetramer of dimers.

The protein resides in the cytoplasm. The catalysed reaction is 3-amino-2-oxopropyl phosphate + 1-deoxy-D-xylulose 5-phosphate = pyridoxine 5'-phosphate + phosphate + 2 H2O + H(+). The protein operates within cofactor biosynthesis; pyridoxine 5'-phosphate biosynthesis; pyridoxine 5'-phosphate from D-erythrose 4-phosphate: step 5/5. Its function is as follows. Catalyzes the complicated ring closure reaction between the two acyclic compounds 1-deoxy-D-xylulose-5-phosphate (DXP) and 3-amino-2-oxopropyl phosphate (1-amino-acetone-3-phosphate or AAP) to form pyridoxine 5'-phosphate (PNP) and inorganic phosphate. In Pseudomonas putida (strain GB-1), this protein is Pyridoxine 5'-phosphate synthase.